The sequence spans 245 residues: Pre-hexon-linking protein VIII (245 aa).

A propeptide spanning residues 116 to 167 (LMVGRTEGRMQLAGGLTEGRVQLSGGFHGRPLVRGRSRRPPRWCGAELTGNG) is cleaved from the precursor.

The protein belongs to the adenoviridae hexon-linking protein family. As to quaternary structure, interacts with the peripentonal hexons as well as the hexons in the facets. Part of a complex composed of the core-capsid bridging protein, the endosome lysis protein VI and the hexon-linking protein VIII; these interactions bridge the virus core to the capsid. Cleaved by the viral protease during virion maturation. May cause the middle segment to be shed from the capsid.

The protein localises to the virion. It is found in the host nucleus. In terms of biological role, structural component of the virion that acts as a cement protein on the capsid interior and which glue the peripentonal hexons and group-of-nine hexons together. The polypeptide is Pre-hexon-linking protein VIII (Galliformes (FAdV-1)).